Here is a 225-residue protein sequence, read N- to C-terminus: 7-cyano-7-deazaguanine synthase (225 aa).

10-20 contacts ATP; that stretch reads FSGGQDSTTLA. Zn(2+) contacts are provided by cysteine 190, cysteine 205, cysteine 208, and cysteine 211.

It belongs to the QueC family. Requires Zn(2+) as cofactor.

The enzyme catalyses 7-carboxy-7-deazaguanine + NH4(+) + ATP = 7-cyano-7-deazaguanine + ADP + phosphate + H2O + H(+). It functions in the pathway purine metabolism; 7-cyano-7-deazaguanine biosynthesis. Functionally, catalyzes the ATP-dependent conversion of 7-carboxy-7-deazaguanine (CDG) to 7-cyano-7-deazaguanine (preQ(0)). This is 7-cyano-7-deazaguanine synthase from Helicobacter acinonychis (strain Sheeba).